We begin with the raw amino-acid sequence, 458 residues long: Flap endonuclease 1 (458 aa).

The tract at residues 1-105 is N-domain; that stretch reads MGIKGLTGLL…GVLSKRFEKR (105 aa). D34 lines the Mg(2+) pocket. Residues R47 and R71 each coordinate DNA. Mg(2+) contacts are provided by D87, E159, E161, D180, and D182. Residues 123-254 form an I-domain region; it reads DVDRFSRRTV…KSALKLIREF (132 aa). Position 159 (E159) interacts with DNA. 2 residues coordinate DNA: G232 and D234. Position 234 (D234) interacts with Mg(2+). 2 disordered regions span residues 268–347 and 416–458; these read AAAR…IPDE and GFFT…AKKK. Acidic residues-rich tracts occupy residues 275–285 and 293–309; these read AEEEDEEEAEE and EMPD…DEEE. The segment covering 310–329 has biased composition (basic and acidic residues); that stretch reads AERRKKAEAAKKKKAQEKAK. The interval 410-418 is interaction with PCNA; the sequence is QQGRLDGFF. Positions 442–452 are enriched in basic and acidic residues; sequence RKGEDKAEGSG.

It belongs to the XPG/RAD2 endonuclease family. FEN1 subfamily. In terms of assembly, interacts with PCNA. Three molecules of FEN1 bind to one PCNA trimer with each molecule binding to one PCNA monomer. PCNA stimulates the nuclease activity without altering cleavage specificity. Mg(2+) is required as a cofactor. In terms of processing, phosphorylated. Phosphorylation upon DNA damage induces relocalization to the nuclear plasma.

Its subcellular location is the nucleus. The protein localises to the nucleolus. It is found in the nucleoplasm. The protein resides in the mitochondrion. Its function is as follows. Structure-specific nuclease with 5'-flap endonuclease and 5'-3' exonuclease activities involved in DNA replication and repair. During DNA replication, cleaves the 5'-overhanging flap structure that is generated by displacement synthesis when DNA polymerase encounters the 5'-end of a downstream Okazaki fragment. It enters the flap from the 5'-end and then tracks to cleave the flap base, leaving a nick for ligation. Also involved in the long patch base excision repair (LP-BER) pathway, by cleaving within the apurinic/apyrimidinic (AP) site-terminated flap. Acts as a genome stabilization factor that prevents flaps from equilibrating into structures that lead to duplications and deletions. Also possesses 5'-3' exonuclease activity on nicked or gapped double-stranded DNA, and exhibits RNase H activity. Also involved in replication and repair of rDNA and in repairing mitochondrial DNA. In Coprinopsis cinerea (strain Okayama-7 / 130 / ATCC MYA-4618 / FGSC 9003) (Inky cap fungus), this protein is Flap endonuclease 1.